The following is a 158-amino-acid chain: NAD(P)H-quinone oxidoreductase subunit J, chloroplastic (158 aa).

This sequence belongs to the complex I 30 kDa subunit family. In terms of assembly, NDH is composed of at least 16 different subunits, 5 of which are encoded in the nucleus.

It localises to the plastid. Its subcellular location is the chloroplast thylakoid membrane. It carries out the reaction a plastoquinone + NADH + (n+1) H(+)(in) = a plastoquinol + NAD(+) + n H(+)(out). The catalysed reaction is a plastoquinone + NADPH + (n+1) H(+)(in) = a plastoquinol + NADP(+) + n H(+)(out). Its function is as follows. NDH shuttles electrons from NAD(P)H:plastoquinone, via FMN and iron-sulfur (Fe-S) centers, to quinones in the photosynthetic chain and possibly in a chloroplast respiratory chain. The immediate electron acceptor for the enzyme in this species is believed to be plastoquinone. Couples the redox reaction to proton translocation, and thus conserves the redox energy in a proton gradient. This chain is NAD(P)H-quinone oxidoreductase subunit J, chloroplastic, found in Angiopteris evecta (Mule's foot fern).